A 710-amino-acid polypeptide reads, in one-letter code: Solute carrier organic anion transporter family member 3A1 (710 aa).

Residue M1 is modified to N-acetylmethionine. Residues 1-15 are compositionally biased toward gly residues; it reads MQGKKPGGSSGGGRS. The segment at 1-25 is disordered; it reads MQGKKPGGSSGGGRSGELQGDEAQR. Residues 1-40 are Cytoplasmic-facing; sequence MQGKKPGGSSGGGRSGELQGDEAQRNKKKKKKVSCFSNIK. A helical transmembrane segment spans residues 41 to 60; the sequence is IFLVSECALMLAQGTVGAYL. Over 61–79 the chain is Extracellular; the sequence is VSVLTTLERRFNLQSADVG. Residues 80 to 100 traverse the membrane as a helical segment; the sequence is VIASSFEIGNLALILFVSYFG. Topologically, residues 101 to 106 are cytoplasmic; it reads ARGHRP. A helical membrane pass occupies residues 107 to 131; it reads RLIGCGGIVMALGALLSALPEFLTH. Over 132–174 the chain is Extracellular; sequence QYKYEAGEIRWGAEGRDVCATNGSSSDEGPDPDLICRNRTATN. Residues N153 and N169 are each glycosylated (N-linked (GlcNAc...) asparagine). The helical transmembrane segment at 175–203 threads the bilayer; it reads MMYLLLIGAQVLLGIGATPVQPLGVSYID. Residues 204–222 lie on the Cytoplasmic side of the membrane; the sequence is DHVRRKDSSLYIGILFTML. A helical membrane pass occupies residues 223 to 243; the sequence is VFGPACGFILGSFCTKIYVDA. The Extracellular portion of the chain corresponds to 244–261; that stretch reads VFIDTSNLDITPDDPRWI. A helical membrane pass occupies residues 262–286; that stretch reads GAWWGGFLLCGALLFFSSLLMFGFP. Over 287 to 344 the chain is Cytoplasmic; sequence QSLPPHSEPGMESEQAMLPEREYERPKPSNGVLRHPLEPDSSASCFQQLRVIPKVTKH. The helical transmembrane segment at 345–366 threads the bilayer; that stretch reads LLSNPVFTCIVLAACMEIAVVA. Over 367–386 the chain is Extracellular; it reads GFAAFLGKYLEQQFNLTTSS. Residue N381 is glycosylated (N-linked (GlcNAc...) asparagine). Residues 387–410 form a helical membrane-spanning segment; the sequence is ANQLLGMTAIPCACLGIFLGGLLV. At 411 to 414 the chain is on the cytoplasmic side; sequence KKLS. A helical membrane pass occupies residues 415-438; it reads LSALGAIRMAMLVNLVSTACYVSF. Residues 439–539 lie on the Extracellular side of the membrane; the sequence is LFLGCDTVPV…PGCQEAFLTF (101 aa). N-linked (GlcNAc...) asparagine glycosylation is present at N457. A Kazal-like domain is found at 465-513; sequence LDPYSPCNNNCECQTDSFTPVCGADGITYLSACFAGCNSTNLTGCACLT. Cystine bridges form between C471/C501, C477/C497, and C486/C511. 3 N-linked (GlcNAc...) asparagine glycosylation sites follow: N502, N505, and N519. The helical transmembrane segment at 540–562 threads the bilayer; sequence LCVMCVCSLIGAMAQTPSVIILI. Over 563–571 the chain is Cytoplasmic; it reads RTVSPELKS. Residues 572–597 traverse the membrane as a helical segment; sequence YALGVLFLLLRLLGFIPPPLIFGAGI. Residues 598-630 lie on the Extracellular side of the membrane; that stretch reads DSTCLFWSTFCGEQGACVLYDNVVYRYLYVSIA. Residues 631–648 form a helical membrane-spanning segment; sequence IALKSFAFILYTTTWQCL. The Cytoplasmic portion of the chain corresponds to 649-705; that stretch reads RKNYKRYIKNHEGGLSTSEFLASTLTLDNLGRDPVPAHQTHRTKFIYNLEDHEWCEN.

This sequence belongs to the organo anion transporter (TC 2.A.60) family. As to expression, expressed in many brain regions, including frontal cortex, brain stem and cerebellum. Associated with neuronal bodies in a punctated matter. Detected at the arcuate nucleus and the choroid plexus (at protein level). Little expression, if any, in oligodendrocytes. In the cardiovascular system, detected in cardiac muscle cells and endothelial cells of aorta, coronary artery and left ventricular endocardium (at protein level). In the respiratory system, detected in alveolar epithelial cells and in mucosal epithelium of the trachea (at protein level). In the reproductive system, detected in spermatozoa, oocytes, smooth muscle cells of the ovary, epithelium of the glandula uterine, smooth muscle cells of the myometrium and epithelium of the endometrium (at protein level). In the kidney, detected in afferent and efferent arterioles, and the epithelium of distal tubules and collecting tubules (at protein level).

It localises to the basolateral cell membrane. It is found in the apical cell membrane. The protein localises to the basal cell membrane. It carries out the reaction L-thyroxine(out) = L-thyroxine(in). The enzyme catalyses prostaglandin E1(out) = prostaglandin E1(in). It catalyses the reaction prostaglandin E2(out) = prostaglandin E2(in). The catalysed reaction is prostaglandin F2alpha(out) = prostaglandin F2alpha(in). It carries out the reaction (5Z,8Z,11Z,14Z)-eicosatetraenoate(out) = (5Z,8Z,11Z,14Z)-eicosatetraenoate(in). The enzyme catalyses taurocholate(out) = taurocholate(in). It catalyses the reaction glycocholate(out) = glycocholate(in). The catalysed reaction is estrone 3-sulfate(out) = estrone 3-sulfate(in). It carries out the reaction argipressin(out) = argipressin(in). Functionally, putative organic anion antiporter with apparent broad substrate specificity. Recognizes various substrates including thyroid hormone L-thyroxine, prostanoids such as prostaglandin E1 and E2, bile acids such as taurocholate, glycolate and glycochenodeoxycholate and peptide hormones such as L-arginine vasopressin, likely operating in a tissue-specific manner. The transport mechanism, its electrogenicity and potential tissue-specific counterions remain to be elucidated. The sequence is that of Solute carrier organic anion transporter family member 3A1 (Slco3a1) from Rattus norvegicus (Rat).